Reading from the N-terminus, the 350-residue chain is Phenylalanine--tRNA ligase alpha subunit (350 aa).

Glutamate 257 is a binding site for Mg(2+).

It belongs to the class-II aminoacyl-tRNA synthetase family. Phe-tRNA synthetase alpha subunit type 1 subfamily. In terms of assembly, tetramer of two alpha and two beta subunits. It depends on Mg(2+) as a cofactor.

The protein localises to the cytoplasm. It catalyses the reaction tRNA(Phe) + L-phenylalanine + ATP = L-phenylalanyl-tRNA(Phe) + AMP + diphosphate + H(+). The polypeptide is Phenylalanine--tRNA ligase alpha subunit (Listeria monocytogenes serotype 4b (strain CLIP80459)).